Here is a 349-residue protein sequence, read N- to C-terminus: N-acetyl-gamma-glutamyl-phosphate reductase (349 aa).

Cys152 is a catalytic residue.

The protein belongs to the NAGSA dehydrogenase family. Type 1 subfamily.

It is found in the cytoplasm. It catalyses the reaction N-acetyl-L-glutamate 5-semialdehyde + phosphate + NADP(+) = N-acetyl-L-glutamyl 5-phosphate + NADPH + H(+). It participates in amino-acid biosynthesis; L-arginine biosynthesis; N(2)-acetyl-L-ornithine from L-glutamate: step 3/4. Its function is as follows. Catalyzes the NADPH-dependent reduction of N-acetyl-5-glutamyl phosphate to yield N-acetyl-L-glutamate 5-semialdehyde. The polypeptide is N-acetyl-gamma-glutamyl-phosphate reductase (Clavibacter sepedonicus (Clavibacter michiganensis subsp. sepedonicus)).